The primary structure comprises 500 residues: Cytochrome P450 71B22 (500 aa).

The helical transmembrane segment at 1-21 (MSISLYFLLLLPLFLIFFKKL) threads the bilayer. Cys441 lines the heme pocket.

It belongs to the cytochrome P450 family. It depends on heme as a cofactor.

It is found in the membrane. In Arabidopsis thaliana (Mouse-ear cress), this protein is Cytochrome P450 71B22 (CYP71B22).